We begin with the raw amino-acid sequence, 232 residues long: Phosphoglycolate phosphatase (232 aa).

Catalysis depends on aspartate 8, which acts as the Nucleophile. Positions 8 and 10 each coordinate Mg(2+). Residue lysine 155 participates in substrate binding. Mg(2+) contacts are provided by aspartate 178 and aspartate 182.

The protein belongs to the archaeal SPP-like hydrolase family. The cofactor is Mg(2+).

It catalyses the reaction 2-phosphoglycolate + H2O = glycolate + phosphate. In terms of biological role, catalyzes the dephosphorylation of 2-phosphoglycolate. The chain is Phosphoglycolate phosphatase from Methanospirillum hungatei JF-1 (strain ATCC 27890 / DSM 864 / NBRC 100397 / JF-1).